The sequence spans 149 residues: Large ribosomal subunit protein eL19 (149 aa).

The disordered stretch occupies residues 67-90 (KRKLQKRKGRRRGHGSRKGAKGAR).

The protein belongs to the eukaryotic ribosomal protein eL19 family. In terms of assembly, part of the 50S ribosomal subunit.

In terms of biological role, binds to the 23S rRNA. The chain is Large ribosomal subunit protein eL19 from Archaeoglobus fulgidus (strain ATCC 49558 / DSM 4304 / JCM 9628 / NBRC 100126 / VC-16).